The chain runs to 241 residues: Triosephosphate isomerase (241 aa).

9–11 contributes to the substrate binding site; sequence NWK. H96 functions as the Electrophile in the catalytic mechanism. E165 functions as the Proton acceptor in the catalytic mechanism. Substrate contacts are provided by residues G171, S204, and 225 to 226; that span reads GG.

Belongs to the triosephosphate isomerase family. As to quaternary structure, homodimer.

The protein resides in the cytoplasm. It carries out the reaction D-glyceraldehyde 3-phosphate = dihydroxyacetone phosphate. It participates in carbohydrate biosynthesis; gluconeogenesis. Its pathway is carbohydrate degradation; glycolysis; D-glyceraldehyde 3-phosphate from glycerone phosphate: step 1/1. In terms of biological role, involved in the gluconeogenesis. Catalyzes stereospecifically the conversion of dihydroxyacetone phosphate (DHAP) to D-glyceraldehyde-3-phosphate (G3P). This chain is Triosephosphate isomerase, found in Nostoc sp. (strain PCC 7120 / SAG 25.82 / UTEX 2576).